The sequence spans 86 residues: Acyl carrier protein (86 aa).

The Carrier domain maps to 7-85 (SKVDNIEQKV…DVVNYIKEHK (79 aa)). Position 45 is an O-(pantetheine 4'-phosphoryl)serine (S45).

It belongs to the acyl carrier protein (ACP) family. In terms of processing, 4'-phosphopantetheine is transferred from CoA to a specific serine of apo-ACP by AcpS. This modification is essential for activity because fatty acids are bound in thioester linkage to the sulfhydryl of the prosthetic group.

It is found in the cytoplasm. Its pathway is lipid metabolism; fatty acid biosynthesis. Carrier of the growing fatty acid chain in fatty acid biosynthesis. The sequence is that of Acyl carrier protein from Rickettsia bellii (strain RML369-C).